The chain runs to 277 residues: Phosphonoacetaldehyde hydrolase-like protein (277 aa).

The protein belongs to the HAD-like hydrolase superfamily. PhnX family.

The sequence is that of Phosphonoacetaldehyde hydrolase-like protein (phnX2) from Syntrophobacter fumaroxidans (strain DSM 10017 / MPOB).